A 351-amino-acid polypeptide reads, in one-letter code: Ion-translocating oxidoreductase complex subunit D (351 aa).

The next 3 helical transmembrane spans lie at 37–57 (YFFGWGTLLQVLLAIITAILA), 88–108 (AIPPLSPWWLTVIGVFFAIVI), and 123–143 (PAMAAYVVLLISFPVQMTTWL). Thr-187 is modified (FMN phosphoryl threonine). 4 helical membrane-spanning segments follow: residues 214 to 234 (FAGLGWLWVNVGFLLGGLFLL), 241 to 261 (WHIPVSFLASLFIVSSLFAVF), 270 to 290 (IFNLFSGATMLGAFFIATDPV), and 300 to 317 (LYYGALIGLLVYMIRSWG).

Belongs to the NqrB/RnfD family. The complex is composed of six subunits: RnfA, RnfB, RnfC, RnfD, RnfE and RnfG. It depends on FMN as a cofactor.

It localises to the cell inner membrane. Part of a membrane-bound complex that couples electron transfer with translocation of ions across the membrane. The polypeptide is Ion-translocating oxidoreductase complex subunit D (Aliivibrio salmonicida (strain LFI1238) (Vibrio salmonicida (strain LFI1238))).